The chain runs to 633 residues: Putative ankyrin repeat protein L774 (633 aa).

7 ANK repeats span residues 91–120, 123–152, 221–250, 252–275, 338–367, 369–393, and 517–546; these read IYGHLYCLYIKNNRLDLCDYLIQSNYEYDP, NCDDILEFVPDENEADVLMYIINNNNFFKI, NVNKLLEIACIFSITEIVTHLLDIGTEYDF, TILKSHISLHILKIFLNRGNILDS, DYDVVMKKAIMNSSLDIIDYCISNGTDVNN, MTYAFQHYNQSCFTHLLNQGGTLST, and DNLKILFVAIMKYDIDMLKFLFEINDNSND.

This chain is Putative ankyrin repeat protein L774, found in Acanthamoeba polyphaga mimivirus (APMV).